A 1055-amino-acid chain; its full sequence is Auxin response factor 16 (1055 aa).

The segment at residues 127 to 229 (FCKTLTASDT…QLLLGIRRAT (103 aa)) is a DNA-binding region (TF-B3). Disordered regions lie at residues 485–510 (PVMSQHQQQPHQLSQQQQVQPSQQSS), 532–565 (QEHLQRQQSQPAQQLKAASSLHSVEQHKLKEQTS), 585–609 (SQLQQLGLPKSPTHRQGLTGLPIAG), 701–720 (SDSIGQLKQSPSQQAPLNHM), and 732–769 (SHSALAESGDPSSSTAPSTSRISPINSLSRANQGSRNL). Composition is skewed to low complexity over residues 488–510 (SQHQQQPHQLSQQQQVQPSQQSS) and 532–552 (QEHLQRQQSQPAQQLKAASSL). Residues 742-756 (PSSSTAPSTSRISPI) show a composition bias toward low complexity. The segment covering 757–769 (NSLSRANQGSRNL) has biased composition (polar residues). In terms of domain architecture, PB1 spans 940–1024 (RTFTKVQKRG…KSIKILSAAE (85 aa)). Residues 1034-1055 (LGGVPPQTQACSASDDANAWRG) form a disordered region.

This sequence belongs to the ARF family. In terms of assembly, homodimers and heterodimers. In terms of tissue distribution, expressed in roots, culms, leaves and young panicles.

The protein localises to the nucleus. In terms of biological role, auxin response factors (ARFs) are transcriptional factors that bind specifically to the DNA sequence 5'-TGTCTC-3' found in the auxin-responsive promoter elements (AuxREs). The chain is Auxin response factor 16 (ARF16) from Oryza sativa subsp. japonica (Rice).